The following is a 126-amino-acid chain: Holo-[acyl-carrier-protein] synthase (126 aa).

Positions 9 and 58 each coordinate Mg(2+).

It belongs to the P-Pant transferase superfamily. AcpS family. Mg(2+) is required as a cofactor.

It is found in the cytoplasm. The enzyme catalyses apo-[ACP] + CoA = holo-[ACP] + adenosine 3',5'-bisphosphate + H(+). Transfers the 4'-phosphopantetheine moiety from coenzyme A to a Ser of acyl-carrier-protein. This is Holo-[acyl-carrier-protein] synthase from Salmonella agona (strain SL483).